The sequence spans 255 residues: Pyrroloquinoline-quinone synthase (255 aa).

The protein belongs to the PqqC family.

The catalysed reaction is 6-(2-amino-2-carboxyethyl)-7,8-dioxo-1,2,3,4,7,8-hexahydroquinoline-2,4-dicarboxylate + 3 O2 = pyrroloquinoline quinone + 2 H2O2 + 2 H2O + H(+). The protein operates within cofactor biosynthesis; pyrroloquinoline quinone biosynthesis. Ring cyclization and eight-electron oxidation of 3a-(2-amino-2-carboxyethyl)-4,5-dioxo-4,5,6,7,8,9-hexahydroquinoline-7,9-dicarboxylic-acid to PQQ. The sequence is that of Pyrroloquinoline-quinone synthase from Cereibacter sphaeroides (strain ATCC 17029 / ATH 2.4.9) (Rhodobacter sphaeroides).